The following is a 91-amino-acid chain: Large ribosomal subunit protein uL23c (91 aa).

It belongs to the universal ribosomal protein uL23 family. As to quaternary structure, part of the 50S ribosomal subunit.

The protein resides in the plastid. It is found in the chloroplast. Its function is as follows. Binds to 23S rRNA. The sequence is that of Large ribosomal subunit protein uL23c (rpl23) from Huperzia lucidula (Shining clubmoss).